The chain runs to 258 residues: Imidazole glycerol phosphate synthase subunit HisF (258 aa).

Residues D11 and D130 contribute to the active site.

Belongs to the HisA/HisF family. As to quaternary structure, heterodimer of HisH and HisF.

It localises to the cytoplasm. The catalysed reaction is 5-[(5-phospho-1-deoxy-D-ribulos-1-ylimino)methylamino]-1-(5-phospho-beta-D-ribosyl)imidazole-4-carboxamide + L-glutamine = D-erythro-1-(imidazol-4-yl)glycerol 3-phosphate + 5-amino-1-(5-phospho-beta-D-ribosyl)imidazole-4-carboxamide + L-glutamate + H(+). It functions in the pathway amino-acid biosynthesis; L-histidine biosynthesis; L-histidine from 5-phospho-alpha-D-ribose 1-diphosphate: step 5/9. Its function is as follows. IGPS catalyzes the conversion of PRFAR and glutamine to IGP, AICAR and glutamate. The HisF subunit catalyzes the cyclization activity that produces IGP and AICAR from PRFAR using the ammonia provided by the HisH subunit. The chain is Imidazole glycerol phosphate synthase subunit HisF from Xanthomonas axonopodis pv. citri (strain 306).